The primary structure comprises 56 residues: Large ribosomal subunit protein bL32 (56 aa).

A disordered region spans residues 1–29; it reads MAVQQNKPSRSKRGMRRSHDALTTSSVSV.

The protein belongs to the bacterial ribosomal protein bL32 family.

In Pectobacterium atrosepticum (strain SCRI 1043 / ATCC BAA-672) (Erwinia carotovora subsp. atroseptica), this protein is Large ribosomal subunit protein bL32.